The sequence spans 495 residues: Ribose import ATP-binding protein RbsA (495 aa).

2 ABC transporter domains span residues 7-242 and 250-491; these read LEMR…VGRP and ERDI…TGVN. 39 to 46 is a binding site for ATP; it reads GENGAGKS.

The protein belongs to the ABC transporter superfamily. Ribose importer (TC 3.A.1.2.1) family. In terms of assembly, the complex is composed of an ATP-binding protein (RbsA), two transmembrane proteins (RbsC) and a solute-binding protein (RbsB).

The protein localises to the cell inner membrane. The enzyme catalyses D-ribose(out) + ATP + H2O = D-ribose(in) + ADP + phosphate + H(+). In terms of biological role, part of the ABC transporter complex RbsABC involved in ribose import. Responsible for energy coupling to the transport system. This is Ribose import ATP-binding protein RbsA from Shigella dysenteriae serotype 1 (strain Sd197).